Consider the following 318-residue polypeptide: Pyrimidine-specific ribonucleoside hydrolase RihA (318 aa).

His240 is a catalytic residue.

Belongs to the IUNH family. RihA subfamily.

Functionally, hydrolyzes cytidine or uridine to ribose and cytosine or uracil, respectively. The sequence is that of Pyrimidine-specific ribonucleoside hydrolase RihA from Shewanella sp. (strain MR-4).